A 202-amino-acid polypeptide reads, in one-letter code: Dephospho-CoA kinase (202 aa).

The DPCK domain maps to 5–202 (IVGLTGGIAS…DADYRARANP (198 aa)). 13 to 18 (ASGKSA) provides a ligand contact to ATP.

The protein belongs to the CoaE family.

Its subcellular location is the cytoplasm. The enzyme catalyses 3'-dephospho-CoA + ATP = ADP + CoA + H(+). Its pathway is cofactor biosynthesis; coenzyme A biosynthesis; CoA from (R)-pantothenate: step 5/5. Functionally, catalyzes the phosphorylation of the 3'-hydroxyl group of dephosphocoenzyme A to form coenzyme A. The polypeptide is Dephospho-CoA kinase (Xanthomonas axonopodis pv. citri (strain 306)).